The sequence spans 301 residues: Mitochondrial carnitine/acylcarnitine carrier protein (301 aa).

Ala-2 bears the N-acetylalanine mark. The Cytoplasmic portion of the chain corresponds to 2 to 12 (ADEPKPISPFK). Solcar repeat units lie at residues 8 to 99 (ISPF…GKKL), 108 to 196 (LSYP…LKNL), and 207 to 293 (LSVP…AMKF). Residues 13–31 (NLLAGGFGGMCLVFVGHPL) form a helical membrane-spanning segment. The Mitochondrial matrix portion of the chain corresponds to 32-73 (DTVKVRLQTQPPSLSGQPPMYSGTLDCFRKTLMREGITGLYR). Residues 74-93 (GMAAPIIGVTPMFAVCFFGF) form a helical membrane-spanning segment. Over 94-112 (GLGKKLQQKSPEDELSYPQ) the chain is Cytoplasmic. A helical membrane pass occupies residues 113–131 (LFTAGMLSGVFTTGIMTPG). Over 132-170 (ERIKCLLQIQASSGENKYSGTLDCAKKLYQEFGIRGFYK) the chain is Mitochondrial matrix. 2 positions are modified to N6-acetyllysine: Lys-148 and Lys-157. Lys-170 is subject to N6-acetyllysine; alternate. Lys-170 carries the post-translational modification N6-succinyllysine; alternate. Residues 171 to 190 (GTVLTLMRDVPASGMYFMTY) form a helical membrane-spanning segment. Residues 191 to 211 (EWLKNLFTPEGKSVSDLSVPR) are Cytoplasmic-facing. Residues 212–230 (ILVAGGFAGIFNWAVAIPP) form a helical membrane-spanning segment. Residues 231 to 267 (DVLKSRFQTAPPGKYPNGFRDVLRELIREEGVTSLYK) lie on the Mitochondrial matrix side of the membrane. Residues 268-287 (GFNAVMIRAFPANAACFLGF) form a helical membrane-spanning segment. At 288-301 (EIAMKFLNWIAPNL) the chain is on the cytoplasmic side.

This sequence belongs to the mitochondrial carrier (TC 2.A.29) family. Widely expressed, with highest levels in the liver, intermediate levels in heart, testis and kidney and low levels in brain, including cortex, cerebellum, hippocampus and hypothalamus.

The protein resides in the mitochondrion inner membrane. It catalyses the reaction O-acetyl-(R)-carnitine(in) + (R)-carnitine(out) = O-acetyl-(R)-carnitine(out) + (R)-carnitine(in). The catalysed reaction is an O-acyl-(R)-carnitine(in) + (R)-carnitine(out) = an O-acyl-(R)-carnitine(out) + (R)-carnitine(in). The enzyme catalyses O-propanoyl-(R)-carnitine(in) + (R)-carnitine(out) = O-propanoyl-(R)-carnitine(out) + (R)-carnitine(in). It carries out the reaction O-hexadecanoyl-(R)-carnitine(in) + (R)-carnitine(out) = O-hexadecanoyl-(R)-carnitine(out) + (R)-carnitine(in). It catalyses the reaction O-octanoyl-(R)-carnitine(in) + (R)-carnitine(out) = O-octanoyl-(R)-carnitine(out) + (R)-carnitine(in). The catalysed reaction is (R)-carnitine(in) = (R)-carnitine(out). In terms of biological role, mediates the electroneutral exchange of acylcarnitines (O-acyl-(R)-carnitine or L-acylcarnitine) of different acyl chain lengths (ranging from O-acetyl-(R)-carnitine to long-chain O-acyl-(R)-carnitines) with free carnitine ((R)-carnitine or L-carnitine) across the mitochondrial inner membrane, via a ping-pong mechanism. Key player in the mitochondrial oxidation pathway, it translocates the fatty acids in the form of acylcarnitines into the mitochondrial matrix, where the carnitine palmitoyltransferase 2 (CPT-2) activates them to undergo fatty acid beta-oxidation. Catalyzes the unidirectional transport (uniport) of carnitine at lower rates than the antiport (exchange). The sequence is that of Mitochondrial carnitine/acylcarnitine carrier protein from Mus musculus (Mouse).